We begin with the raw amino-acid sequence, 357 residues long: MPEPGPDAAGTASAQPQPPPPPPPAPKESPFSIKNLLNGDHHRPPPKPQPPPRTLFAPASAAAAAAAAAAAAAKGALEGAAGFALSQVGDLAFPRFEIPAQRFALPAHYLERSPAWWYPYTLTPAGGHLPRPEASEKALLRDSSPASGTDRDSPEPLLKADPDHKELDSKSPDEIILEESDSEESKKEGEAAPGAAGASVGAAAATPGAEDWKKGAESPEKKPACRKKKTRTVFSRSQVFQLESTFDMKRYLSSSERAGLAASLHLTETQVKIWFQNRRNKWKRQLAAELEAANLSHAAAQRIVRVPILYHENSAAEGAAAAAAGAPVPVSQPLLTFPHPVYYSHPVVSSVPLLRPV.

Disordered stretches follow at residues 1–58 (MPEP…LFAP) and 129–229 (LPRP…RKKK). The segment covering 16–27 (PQPPPPPPPAPK) has biased composition (pro residues). 2 stretches are compositionally biased toward basic and acidic residues: residues 130–140 (PRPEASEKALL) and 149–173 (TDRDSPEPLLKADPDHKELDSKSPD). 2 positions are modified to phosphoserine: serine 153 and serine 180. Low complexity predominate over residues 191-209 (AAPGAAGASVGAAAATPGA). The segment covering 210–223 (EDWKKGAESPEKKP) has biased composition (basic and acidic residues). Positions 227–286 (KKKTRTVFSRSQVFQLESTFDMKRYLSSSERAGLAASLHLTETQVKIWFQNRRNKWKRQL) form a DNA-binding region, homeobox.

Belongs to the HMX homeobox family.

The protein resides in the nucleus. Its function is as follows. Transcription factor involved in specification of neuronal cell types and which is required for inner ear and hypothalamus development. Binds to the 5'-CAAGTG-3' core sequence. Controls semicircular canal formation in the inner ear. Also required for hypothalamic/pituitary axis of the CNS. The chain is Homeobox protein HMX3 (HMX3) from Homo sapiens (Human).